Reading from the N-terminus, the 4034-residue chain is Polyketide synthase-nonribosomal peptide synthetase ACE1 (4034 aa).

The region spanning 10 to 448 (TEPIAIIGSG…GANAHVILES (439 aa)) is the Ketosynthase family 3 (KS3) domain. Active-site for beta-ketoacyl synthase activity residues include Cys183, His322, and His368. The segment at 560–879 (VFTGQGAQWA…PYFGCLSRGT (320 aa)) is acyl transferase. Residues 951–1082 (NELLGTRLPD…GDLVVLLGEP (132 aa)) are N-terminal hotdog fold. One can recognise a PKS/mFAS DH domain in the interval 951–1257 (NELLGTRLPD…TKPLSPPSAA (307 aa)). The interval 952-1252 (ELLGTRLPDD…LQGLHTKPLS (301 aa)) is dehydratase (DH) domain. The active-site Proton acceptor; for dehydratase activity is His983. The tract at residues 1097-1257 (MKDIDEERFY…TKPLSPPSAA (161 aa)) is C-terminal hotdog fold. The Proton donor; for dehydratase activity role is filled by Asp1157. Residues 1396-1594 (NMLNRFYSDA…SGADIVTPHH (199 aa)) form a methyltransferase (MT) domain region. Residues 2144–2317 (TYWLVGLTGG…AGSSVEIGCI (174 aa)) form a ketoreductase (KR)domain region. A Carrier 1 domain is found at 2424–2505 (KSSEEVLDIL…LLLEFVQGLI (82 aa)). Position 2465 is an O-(pantetheine 4'-phosphoryl)serine (Ser2465). The segment at 2512–2598 (KLDGSDGADA…SPTTSASMAS (87 aa)) is disordered. The span at 2556-2577 (PSGPASPTSPSSATASPGRSRS) shows a compositional bias: low complexity. Residues 2586–2598 (TPVSPTTSASMAS) are compositionally biased toward polar residues. The segment at 2608–3037 (TVPVSFGQSR…ATSLNRPAIY (430 aa)) is condensation. The adenylation stretch occupies residues 3073-3473 (KYATKFALRN…GGLIIEGRID (401 aa)). In terms of domain architecture, Carrier 2 spans 3598-3678 (AELGSDQARM…AMTDLVLSDD (81 aa)). Residue Ser3638 is modified to O-(pantetheine 4'-phosphoryl)serine. The tract at residues 3719–3944 (LTGATGFLGR…DFVSVENVAA (226 aa)) is reductase-like.

This sequence belongs to the NRP synthetase family.

The protein resides in the cytoplasm. The protein operates within secondary metabolite biosynthesis. In terms of biological role, hybrid PKS-NRPS synthetase; part of the gene cluster that mediates the biosynthesis of a tyrosine-derived cytochalasan acting as a fungal signal recognized by resistant rice plants and leads to avirulence in Pi33 resistant rice cultivars. The first step in the pathway is catalyzed by the hybrid PKS-NRPS ACE1, assisted by the enoyl reductase RAP1, that are responsible for fusion of the tyrosine precursor and the polyketide backbone. The polyketide synthase module (PKS) of ACE1 is responsible for the synthesis of the polyketide backbone and the downstream nonribosomal peptide synthetase (NRPS) amidates the carboxyl end of the polyketide with the tyrosine precursor. Because ACE1 lacks a designated enoylreductase (ER) domain, the required activity is provided the enoyl reductase RAP1. Reduction by the hydrolyase ORFZ, followed by dehydration and intra-molecular Diels-Alder cyclization by the Diels-Alderase ORF3 then yield the required isoindolone-fused macrocycle. A number of oxidative steps catalyzed by the tailoring enzymes identified within the cluster, including cytochrome P450 monooxygenases CYP1 to CYP4, the FAD-linked oxidoreductase OXR2 and the short-chain dehydrogenase/reductase OXR1, are further required to afford the final cytochalasans that confer avirulence and which have still to be identified. The monooxygenase CYP1 has been shown to be a site-selective C-18 hydroxylase whereas the function of CYP3 is the site-selective epoxidation of the C-6/C-7 olefin that is present in some intermediate compounds. Finally, SYN2 and RAP2 are not required for avirulence in Pi33 resistant rice cultivars. The polypeptide is Polyketide synthase-nonribosomal peptide synthetase ACE1 (Pyricularia oryzae (strain 70-15 / ATCC MYA-4617 / FGSC 8958) (Rice blast fungus)).